We begin with the raw amino-acid sequence, 401 residues long: Probable 2,3-bisphosphoglycerate-independent phosphoglycerate mutase (401 aa).

It belongs to the BPG-independent phosphoglycerate mutase family. A-PGAM subfamily.

It catalyses the reaction (2R)-2-phosphoglycerate = (2R)-3-phosphoglycerate. Its pathway is carbohydrate degradation; glycolysis; pyruvate from D-glyceraldehyde 3-phosphate: step 3/5. Catalyzes the interconversion of 2-phosphoglycerate and 3-phosphoglycerate. This Thermotoga neapolitana (strain ATCC 49049 / DSM 4359 / NBRC 107923 / NS-E) protein is Probable 2,3-bisphosphoglycerate-independent phosphoglycerate mutase.